The sequence spans 83 residues: UPF0512 protein I (83 aa).

This sequence belongs to the UPF0512 family.

The sequence is that of UPF0512 protein I from Dictyostelium discoideum (Social amoeba).